We begin with the raw amino-acid sequence, 562 residues long: Dihydroxy-acid dehydratase (562 aa).

D80 contacts Mg(2+). C121 serves as a coordination point for [2Fe-2S] cluster. Positions 122 and 123 each coordinate Mg(2+). Residue K123 is modified to N6-carboxylysine. C194 contacts [2Fe-2S] cluster. A Mg(2+)-binding site is contributed by E446. The active-site Proton acceptor is S472.

This sequence belongs to the IlvD/Edd family. As to quaternary structure, homodimer. It depends on [2Fe-2S] cluster as a cofactor. The cofactor is Mg(2+).

The enzyme catalyses (2R)-2,3-dihydroxy-3-methylbutanoate = 3-methyl-2-oxobutanoate + H2O. It carries out the reaction (2R,3R)-2,3-dihydroxy-3-methylpentanoate = (S)-3-methyl-2-oxopentanoate + H2O. It participates in amino-acid biosynthesis; L-isoleucine biosynthesis; L-isoleucine from 2-oxobutanoate: step 3/4. It functions in the pathway amino-acid biosynthesis; L-valine biosynthesis; L-valine from pyruvate: step 3/4. Functions in the biosynthesis of branched-chain amino acids. Catalyzes the dehydration of (2R,3R)-2,3-dihydroxy-3-methylpentanoate (2,3-dihydroxy-3-methylvalerate) into 2-oxo-3-methylpentanoate (2-oxo-3-methylvalerate) and of (2R)-2,3-dihydroxy-3-methylbutanoate (2,3-dihydroxyisovalerate) into 2-oxo-3-methylbutanoate (2-oxoisovalerate), the penultimate precursor to L-isoleucine and L-valine, respectively. The chain is Dihydroxy-acid dehydratase from Staphylococcus aureus (strain USA300 / TCH1516).